The sequence spans 264 residues: Indole-3-glycerol phosphate synthase (264 aa).

It belongs to the TrpC family.

It carries out the reaction 1-(2-carboxyphenylamino)-1-deoxy-D-ribulose 5-phosphate + H(+) = (1S,2R)-1-C-(indol-3-yl)glycerol 3-phosphate + CO2 + H2O. It participates in amino-acid biosynthesis; L-tryptophan biosynthesis; L-tryptophan from chorismate: step 4/5. This chain is Indole-3-glycerol phosphate synthase, found in Azoarcus sp. (strain BH72).